Consider the following 116-residue polypeptide: Spexin (116 aa).

An N-terminal signal peptide occupies residues 1-26 (MKGFKSLVVMTLTLFLVFSFMGNCNS). The propeptide occupies 27–35 (APQRLFERR). Residue Gln-49 is modified to Glutamine amide. 2 propeptides span residues 50-116 (GRRF…LLNW) and 74-116 (PNSQ…LLNW). The segment covering 53-73 (FLSDQSRRKDLSDRPPLERRS) has biased composition (basic and acidic residues). The disordered stretch occupies residues 53–80 (FLSDQSRRKDLSDRPPLERRSPNSQQLT).

Belongs to the spexin family.

It is found in the secreted. It localises to the extracellular space. Its subcellular location is the cytoplasmic vesicle. The protein localises to the secretory vesicle. Its function is as follows. Plays a role as a central modulator of cardiovascular and renal function and nociception. Also plays a role in energy metabolism and storage. Inhibits adrenocortical cell proliferation with minor stimulation on corticosteroid release. Functionally, acts as a ligand for galanin receptors GALR2 and GALR3. Intracerebroventricular administration of the peptide induces an increase in arterial blood pressure, a decrease in both heart rate and renal excretion and delayed natriuresis. Intraventricular administration of the peptide induces antinociceptive activity. Also induces contraction of muscarinic-like stomach smooth muscles. Intraperitoneal administration of the peptide induces a reduction in food consumption and body weight. Inhibits long chain fatty acid uptake into adipocytes. In terms of biological role, intracerebroventricular administration of the peptide induces a decrease in heart rate, but no change in arterial pressure, and an increase in urine flow rate. Intraventricular administration of the peptide induces antinociceptive activity. The polypeptide is Spexin (SPX) (Bos taurus (Bovine)).